Consider the following 190-residue polypeptide: Molybdenum cofactor guanylyltransferase (190 aa).

GTP contacts are provided by residues 10–12, Lys23, Asn51, Asp69, and Asp99; that span reads LAG. Mg(2+) is bound at residue Asp99.

Belongs to the MobA family. As to quaternary structure, monomer. Requires Mg(2+) as cofactor.

The protein resides in the cytoplasm. The catalysed reaction is Mo-molybdopterin + GTP + H(+) = Mo-molybdopterin guanine dinucleotide + diphosphate. Functionally, transfers a GMP moiety from GTP to Mo-molybdopterin (Mo-MPT) cofactor (Moco or molybdenum cofactor) to form Mo-molybdopterin guanine dinucleotide (Mo-MGD) cofactor. In Mannheimia succiniciproducens (strain KCTC 0769BP / MBEL55E), this protein is Molybdenum cofactor guanylyltransferase.